A 376-amino-acid chain; its full sequence is Homeobox protein extradenticle (376 aa).

A disordered region spans residues 1–37 (MEDPNRMLAHTGGMMAPQGYGLSGQDDGQNAGSENEV). Residues 38 to 237 (RKQKDIGEIL…VMILRSRFLD (200 aa)) enclose the PBC domain. A PBC-A region spans residues 45–124 (EILQQIMSIS…EGVAGPEKGG (80 aa)). The segment at 127–237 (AAAASAAAAS…VMILRSRFLD (111 aa)) is PBC-B. The homeobox; TALE-type DNA-binding region spans 238–300 (ARRKRRNFSK…NKRIRYKKNI (63 aa)). Low complexity predominate over residues 318-335 (ASPYSMAGPPSGTTTPMM). Positions 318–376 (ASPYSMAGPPSGTTTPMMSPAPPQDSMGYPMGSGGYDQQQPYDNSMGGYDPNLHQDLSP) are disordered.

This sequence belongs to the TALE/PBX homeobox family. Interacts with Ubx and hth. As to expression, prior to full germband retraction it is ubiquitously present, after germband retraction, mostly present in the anterior portion of the ventral nerve cord.

Its subcellular location is the nucleus. In terms of biological role, transcription factor which acts with the selector homeodomain proteins altering the regulation of downstream target genes such as wingless (wg), teashirt (tsh) and decapentaplegic (dpp), thus affecting segmental identity. Delimits the eye field and prevent inappropriate eye development. Required for proper localization of chordotonal organs within the peripheral nervous system. The chain is Homeobox protein extradenticle (exd) from Drosophila melanogaster (Fruit fly).